A 541-amino-acid polypeptide reads, in one-letter code: Glucose-6-phosphate isomerase (541 aa).

Catalysis depends on E346, which acts as the Proton donor. Residues H377 and K506 contribute to the active site.

The protein belongs to the GPI family.

The protein localises to the cytoplasm. It carries out the reaction alpha-D-glucose 6-phosphate = beta-D-fructose 6-phosphate. The protein operates within carbohydrate biosynthesis; gluconeogenesis. It participates in carbohydrate degradation; glycolysis; D-glyceraldehyde 3-phosphate and glycerone phosphate from D-glucose: step 2/4. Catalyzes the reversible isomerization of glucose-6-phosphate to fructose-6-phosphate. The sequence is that of Glucose-6-phosphate isomerase from Rhizobium etli (strain CIAT 652).